We begin with the raw amino-acid sequence, 21 residues long: Ferredoxin (21 aa).

The 20-residue stretch at Lys2–Pro21 folds into the 4Fe-4S ferredoxin-type domain. Residues Cys10, Cys13, and Cys16 each contribute to the [4Fe-4S] cluster site.

Monomer. [4Fe-4S] cluster is required as a cofactor.

Ferredoxins are iron-sulfur proteins that transfer electrons in a wide variety of metabolic reactions. This is Ferredoxin (fdxA) from Pyrococcus woesei.